The following is a 122-amino-acid chain: Prefoldin subunit 1 (122 aa).

Position 2 is an N-acetylalanine (A2).

Belongs to the prefoldin subunit beta family. In terms of assembly, heterohexamer of two PFD-alpha type and four PFD-beta type subunits.

In terms of biological role, binds specifically to cytosolic chaperonin (c-CPN) and transfers target proteins to it. Binds to nascent polypeptide chain and promotes folding in an environment in which there are many competing pathways for nonnative proteins. This chain is Prefoldin subunit 1 (PFDN1), found in Homo sapiens (Human).